The chain runs to 395 residues: Outer membrane protein assembly factor BamB (395 aa).

The first 20 residues, 1-20, serve as a signal peptide directing secretion; that stretch reads MKSWCKNLLAAGLSLAMLSA. Residue Cys21 is the site of N-palmitoyl cysteine attachment. Cys21 carries the S-diacylglycerol cysteine lipid modification.

Belongs to the BamB family. In terms of assembly, part of the Bam complex.

The protein resides in the cell outer membrane. In terms of biological role, part of the outer membrane protein assembly complex, which is involved in assembly and insertion of beta-barrel proteins into the outer membrane. The protein is Outer membrane protein assembly factor BamB of Shewanella oneidensis (strain ATCC 700550 / JCM 31522 / CIP 106686 / LMG 19005 / NCIMB 14063 / MR-1).